Here is an 87-residue protein sequence, read N- to C-terminus: Small ribosomal subunit protein eS21 (87 aa).

Belongs to the eukaryotic ribosomal protein eS21 family. Component of the small ribosomal subunit. Mature ribosomes consist of a small (40S) and a large (60S) subunit. The 40S subunit contains about 33 different proteins and 1 molecule of RNA (18S). The 60S subunit contains about 49 different proteins and 3 molecules of RNA (25S, 5.8S and 5S).

It localises to the cytoplasm. In terms of biological role, required for the processing of the 20S rRNA-precursor to mature 18S rRNA in a late step of the maturation of 40S ribosomal subunits. Has a physiological role leading to 18S rRNA stability. The protein is Small ribosomal subunit protein eS21 (RPS21) of Kluyveromyces lactis (strain ATCC 8585 / CBS 2359 / DSM 70799 / NBRC 1267 / NRRL Y-1140 / WM37) (Yeast).